The primary structure comprises 35 residues: NPASCCSCADVDPGRASRKTPKGEDQVFIKEKDRC.

Residues asparagine 1–cysteine 35 form a disordered region. The segment covering proline 21–cysteine 35 has biased composition (basic and acidic residues).

In terms of processing, contains disulfide bonds. In terms of tissue distribution, expressed by the venom duct.

The protein localises to the secreted. The protein is Conotoxin TxMEKL-0422 of Conus textile (Cloth-of-gold cone).